A 187-amino-acid chain; its full sequence is GTP cyclohydrolase 1 (187 aa).

Residues Cys79, His82, and Cys150 each contribute to the Zn(2+) site.

The protein belongs to the GTP cyclohydrolase I family. In terms of assembly, toroid-shaped homodecamer, composed of two pentamers of five dimers.

The enzyme catalyses GTP + H2O = 7,8-dihydroneopterin 3'-triphosphate + formate + H(+). The protein operates within cofactor biosynthesis; 7,8-dihydroneopterin triphosphate biosynthesis; 7,8-dihydroneopterin triphosphate from GTP: step 1/1. The polypeptide is GTP cyclohydrolase 1 (Fusobacterium nucleatum subsp. nucleatum (strain ATCC 25586 / DSM 15643 / BCRC 10681 / CIP 101130 / JCM 8532 / KCTC 2640 / LMG 13131 / VPI 4355)).